Reading from the N-terminus, the 66-residue chain is M-poneratoxin-Dq3a (66 aa).

The signal sequence occupies residues 1-23 (MKLSALSIIFGMILVMTIMYTKA). Positions 24–43 (EAEAEAEADADADAKAEAEA) are excised as a propeptide.

This sequence belongs to the non-disulfide-bridged peptide (NDBP) superfamily. Medium-length antimicrobial peptide (group 3) family. Ponericin-W subfamily. As to expression, expressed by the venom gland.

It localises to the secreted. The protein localises to the target cell membrane. Functionally, may have antimicrobial properties by disrupting the integrity of the bacterial cell membrane. In addition, when tested in vitro on the parasite Trypanosoma cruzi (responsible of the Chagas disease), is able to potently reduce the number of the three forms (epimastigote, trypomastigote and amastigote) by inducing cell death through necrosis. Its function is as follows. May have antimicrobial properties by disrupting the integrity of the bacterial cell membrane. In addition, when tested in vitro on the parasite Trypanosoma cruzi (responsible of the Chagas disease), is able to moderately reduce the number of the forms epimastigote and trypomastigote. Its activity on the amastigote form has not been tested. May have antimicrobial properties by disrupting the integrity of the bacterial cell membrane. In addition, when tested in vitro on the parasite Trypanosoma cruzi (responsible of the Chagas disease), shows only a weak reduction of the number of the trypomastigote forms. Has no activity on the epimastigote forms. Its activity on the amastigote form has not been tested. The chain is M-poneratoxin-Dq3a from Dinoponera quadriceps (South American ant).